The sequence spans 335 residues: NAC domain-containing protein 87 (335 aa).

Residues 21 to 172 (LPPGFRFHPT…EWVVCRVFHK (152 aa)) form the NAC domain. A DNA-binding region spans residues 119-178 (VGMKKTLVFYRGRAPKGEKTNWVMHEYRLEGKYSYYNLPKSARDEWVVCRVFHKNNPSTT).

It is found in the nucleus. Binds to the promoter regions of genes involved in chlorophyll catabolic processes, such as NYC1, SGR1, SGR2 and PAO. This chain is NAC domain-containing protein 87, found in Arabidopsis thaliana (Mouse-ear cress).